A 313-amino-acid chain; its full sequence is Glutathione S-transferase omega-like 2 (313 aa).

Cys-49 acts as the Nucleophile in catalysis. Residues 161 to 289 (PSSLRTKIDE…TDFKHIKCHY (129 aa)) enclose the GST C-terminal domain.

Belongs to the GST superfamily. Omega family.

Its subcellular location is the cytoplasm. The protein localises to the nucleus. It localises to the golgi apparatus. The catalysed reaction is RX + glutathione = an S-substituted glutathione + a halide anion + H(+). The enzyme catalyses L-dehydroascorbate + 2 glutathione = glutathione disulfide + L-ascorbate. In terms of biological role, active as '1-Cys' thiol transferase against beta-hydroxyethyl disulfide (HED), as dehydroascorbate reductase and as dimethylarsinic acid reductase, while not active against the standard GST substrate 1-chloro-2,4-dinitrobenzene (CDNB). May be involved in cell wall organization and biogenesis. The polypeptide is Glutathione S-transferase omega-like 2 (gto2) (Schizosaccharomyces pombe (strain 972 / ATCC 24843) (Fission yeast)).